A 596-amino-acid chain; its full sequence is Elongation factor 4 (596 aa).

A tr-type G domain is found at 2–184 (KHIRNFSIIA…VIVAQIPPPE (183 aa)). GTP is bound by residues 14–19 (DHGKST) and 131–134 (NKID).

This sequence belongs to the TRAFAC class translation factor GTPase superfamily. Classic translation factor GTPase family. LepA subfamily.

It localises to the cell inner membrane. The enzyme catalyses GTP + H2O = GDP + phosphate + H(+). Functionally, required for accurate and efficient protein synthesis under certain stress conditions. May act as a fidelity factor of the translation reaction, by catalyzing a one-codon backward translocation of tRNAs on improperly translocated ribosomes. Back-translocation proceeds from a post-translocation (POST) complex to a pre-translocation (PRE) complex, thus giving elongation factor G a second chance to translocate the tRNAs correctly. Binds to ribosomes in a GTP-dependent manner. This chain is Elongation factor 4, found in Shewanella woodyi (strain ATCC 51908 / MS32).